The following is a 350-amino-acid chain: Glyceraldehyde-3-phosphate dehydrogenase (350 aa).

NAD(+) is bound by residues 13 to 14 (TI) and G118. A D-glyceraldehyde 3-phosphate-binding site is contributed by 147–149 (SCN). C148 acts as the Nucleophile in catalysis. Residue R176 coordinates NAD(+). Position 202-203 (202-203 (HG)) interacts with D-glyceraldehyde 3-phosphate. Q309 contributes to the NAD(+) binding site. The disordered stretch occupies residues 327–350 (LEEDPEASMDATDSALGVLNSPPL).

It belongs to the glyceraldehyde-3-phosphate dehydrogenase family. Homotetramer.

The protein localises to the cytoplasm. It carries out the reaction D-glyceraldehyde 3-phosphate + phosphate + NADP(+) = (2R)-3-phospho-glyceroyl phosphate + NADPH + H(+). The catalysed reaction is D-glyceraldehyde 3-phosphate + phosphate + NAD(+) = (2R)-3-phospho-glyceroyl phosphate + NADH + H(+). It participates in carbohydrate degradation; glycolysis; pyruvate from D-glyceraldehyde 3-phosphate: step 1/5. This is Glyceraldehyde-3-phosphate dehydrogenase from Methanopyrus kandleri (strain AV19 / DSM 6324 / JCM 9639 / NBRC 100938).